Consider the following 173-residue polypeptide: Translation initiation factor IF-3 (173 aa).

This sequence belongs to the IF-3 family. Monomer.

It localises to the cytoplasm. Its function is as follows. IF-3 binds to the 30S ribosomal subunit and shifts the equilibrium between 70S ribosomes and their 50S and 30S subunits in favor of the free subunits, thus enhancing the availability of 30S subunits on which protein synthesis initiation begins. This Campylobacter lari (strain RM2100 / D67 / ATCC BAA-1060) protein is Translation initiation factor IF-3.